The primary structure comprises 266 residues: MAVGKNKGLSKGGKKGLKKKIVDPFTRKDWYDIKAPSMFTTRQVGKTLVNRTQGTKIASEGLKGRVVEVSLADLQSDADAERSFRKFRLIVEDVQNRSVLCNFHGMDLTTDKLRSMVKKWQTLIEAHVDVKTTDGYLLRIFCIGFTQKDQMSTRKTSYAQHSQVRNIRRKMVSIVTDEITKCDLKGVVTKLVPDAIAKDIEKACQGIYPLHDVYIRKVKVLKKPRFELSKLLELHGDGGSKTGEVGETGSKVDRPEGYEPPVQETV.

The tract at residues 237 to 266 is disordered; the sequence is DGGSKTGEVGETGSKVDRPEGYEPPVQETV.

Belongs to the eukaryotic ribosomal protein eS1 family. In terms of assembly, component of the small ribosomal subunit. Mature ribosomes consist of a small (40S) and a large (60S) subunit. The 40S subunit contains about 33 different proteins and 1 molecule of RNA (18S). The 60S subunit contains about 49 different proteins and 3 molecules of RNA (28S, 5.8S and 5S).

Its subcellular location is the cytoplasm. In Lysiphlebus testaceipes (Greenbugs aphid parastoid), this protein is Small ribosomal subunit protein eS1.